The primary structure comprises 309 residues: MANLKAIHEQAAHSGEGSRANIRSIWKEFSSVVKIGIVNSNLITTFTGLWLALYFMGEGFLENLHIVFFTLFGSALVIAGSCSINNFIDRDIDQFMERTKTRPTVTGTMEAKRVLWLGIIFITVGTLSLLMTTVTAAIVGLIGAITYIFLYTMWSKRNYTLNTVVGSISGAVPPVIGWTAVDPDFHVVPLVLFLIMFIWQTPHFLALAMKRCEEYRAAGIPMLPVVHGFAMTKRQIVVWVACLLPLPFYLFSLGVPFLTVATLLNVGWLALGLYGFKMKDDLKWAKWMFIYSLNYLTILFVAMVIATLW.

9 helical membrane-spanning segments follow: residues 35–55 (IGIVNSNLITTFTGLWLALYF), 64–84 (LHIVFFTLFGSALVIAGSCSI), 114–134 (VLWLGIIFITVGTLSLLMTTV), 135–155 (TAAIVGLIGAITYIFLYTMWS), 161–181 (LNTVVGSISGAVPPVIGWTAV), 187–207 (VVPLVLFLIMFIWQTPHFLAL), 236–256 (IVVWVACLLPLPFYLFSLGVP), 257–277 (FLTVATLLNVGWLALGLYGFK), and 289–309 (FIYSLNYLTILFVAMVIATLW).

This sequence belongs to the UbiA prenyltransferase family. Protoheme IX farnesyltransferase subfamily. In terms of assembly, interacts with CtaA.

The protein resides in the cell membrane. The catalysed reaction is heme b + (2E,6E)-farnesyl diphosphate + H2O = Fe(II)-heme o + diphosphate. It functions in the pathway porphyrin-containing compound metabolism; heme O biosynthesis; heme O from protoheme: step 1/1. Its function is as follows. Converts heme B (protoheme IX) to heme O by substitution of the vinyl group on carbon 2 of heme B porphyrin ring with a hydroxyethyl farnesyl side group. The polypeptide is Protoheme IX farnesyltransferase (Geobacillus sp. (strain WCH70)).